A 230-amino-acid chain; its full sequence is Uracil-DNA glycosylase (230 aa).

The active-site Proton acceptor is the aspartate 70.

The protein belongs to the uracil-DNA glycosylase (UDG) superfamily. UNG family.

It is found in the cytoplasm. It catalyses the reaction Hydrolyzes single-stranded DNA or mismatched double-stranded DNA and polynucleotides, releasing free uracil.. Its function is as follows. Excises uracil residues from the DNA which can arise as a result of misincorporation of dUMP residues by DNA polymerase or due to deamination of cytosine. The polypeptide is Uracil-DNA glycosylase (Pseudomonas fluorescens (strain ATCC BAA-477 / NRRL B-23932 / Pf-5)).